The following is a 500-amino-acid chain: Probable malate:quinone oxidoreductase (500 aa).

This sequence belongs to the MQO family. FAD is required as a cofactor.

It catalyses the reaction (S)-malate + a quinone = a quinol + oxaloacetate. Its pathway is carbohydrate metabolism; tricarboxylic acid cycle; oxaloacetate from (S)-malate (quinone route): step 1/1. This Prochlorococcus marinus (strain MIT 9211) protein is Probable malate:quinone oxidoreductase.